Consider the following 151-residue polypeptide: Large ribosomal subunit protein uL22c (151 aa).

This sequence belongs to the universal ribosomal protein uL22 family. As to quaternary structure, part of the 50S ribosomal subunit.

The protein localises to the plastid. It localises to the chloroplast. Its function is as follows. This protein binds specifically to 23S rRNA. In terms of biological role, the globular domain of the protein is located near the polypeptide exit tunnel on the outside of the subunit, while an extended beta-hairpin is found that lines the wall of the exit tunnel in the center of the 70S ribosome. The protein is Large ribosomal subunit protein uL22c (rpl22) of Gossypium barbadense (Sea Island cotton).